The following is a 195-amino-acid chain: Molybdenum cofactor guanylyltransferase (195 aa).

GTP is bound by residues 12–14, K25, N53, D70, and D100; that span reads LAG. Residue D100 participates in Mg(2+) binding.

Belongs to the MobA family. In terms of assembly, monomer. The cofactor is Mg(2+).

Its subcellular location is the cytoplasm. It carries out the reaction Mo-molybdopterin + GTP + H(+) = Mo-molybdopterin guanine dinucleotide + diphosphate. Functionally, transfers a GMP moiety from GTP to Mo-molybdopterin (Mo-MPT) cofactor (Moco or molybdenum cofactor) to form Mo-molybdopterin guanine dinucleotide (Mo-MGD) cofactor. The polypeptide is Molybdenum cofactor guanylyltransferase (Vibrio parahaemolyticus serotype O3:K6 (strain RIMD 2210633)).